The sequence spans 1369 residues: DNA-directed RNA polymerase subunit beta' (1369 aa).

The tract at residues 1-26 (MTSSSPKTRKSSTKSKAKRGSKSKKA) is disordered. A compositionally biased stretch (basic residues) spans 7–24 (KTRKSSTKSKAKRGSKSK). Residues Cys-253, Cys-320, Cys-327, and Cys-330 each contribute to the Zn(2+) site. The disordered stretch occupies residues 1294–1369 (TVDMPSSPVA…LQEEGLLSDE (76 aa)). The segment covering 1342–1351 (DDELSAEDQM) has biased composition (acidic residues). A compositionally biased stretch (low complexity) spans 1357-1369 (LEGLQEEGLLSDE).

It belongs to the RNA polymerase beta' chain family. RpoC2 subfamily. In cyanobacteria the RNAP catalytic core is composed of 2 alpha, 1 beta, 1 beta', 1 gamma and 1 omega subunit. When a sigma factor is associated with the core the holoenzyme is formed, which can initiate transcription. Requires Zn(2+) as cofactor.

It carries out the reaction RNA(n) + a ribonucleoside 5'-triphosphate = RNA(n+1) + diphosphate. DNA-dependent RNA polymerase catalyzes the transcription of DNA into RNA using the four ribonucleoside triphosphates as substrates. This chain is DNA-directed RNA polymerase subunit beta', found in Prochlorococcus marinus (strain NATL2A).